The chain runs to 325 residues: Olfactory receptor 6Y1 (325 aa).

Over 1–30 (MTTIILEVDNHTVTTRFILLGFPTRPAFQL) the chain is Extracellular. An N-linked (GlcNAc...) asparagine glycan is attached at asparagine 10. A helical membrane pass occupies residues 31-51 (LFFSIFLATYLLTLLENLLII). Residues 52–59 (LAIHSDGQ) are Cytoplasmic-facing. Residues 60–80 (LHKPMYFFLSHLSFLEMWYVT) form a helical membrane-spanning segment. Over 81-104 (VISPKMLVDFLSHDKSISFNGCMT) the chain is Extracellular. An intrachain disulfide couples cysteine 102 to cysteine 194. Residues 105–125 (QLYFFVTFVCTEYILLAIMAF) form a helical membrane-spanning segment. The Cytoplasmic segment spans residues 126–144 (DRYVAICNPLRYPVIMTNQ). The helical transmembrane segment at 145-165 (LCGTLAGGCWFCGLMTAMIKM) threads the bilayer. The Extracellular portion of the chain corresponds to 166-202 (VFIAQLHYCGMPQINHYFCDISPLLNVSCEDASQAEM). N-linked (GlcNAc...) asparagine glycosylation is present at asparagine 191. Residues 203–222 (VDFFLALMVIAIPLCVVVAS) form a helical membrane-spanning segment. The Cytoplasmic segment spans residues 223-242 (YAAILATILRIPSAQGRQKA). Residues 243 to 263 (FSTCASHLTVVILFYSMTLFT) traverse the membrane as a helical segment. Residues 264 to 276 (YARPKLMYAYNSN) lie on the Extracellular side of the membrane. A helical transmembrane segment spans residues 277 to 297 (KVVSVLYTVIVPLLNPIIYCL). Residues 298–325 (RNHEVKAALRKTIHCRGSGPQGNGAFSS) are Cytoplasmic-facing.

Belongs to the G-protein coupled receptor 1 family.

The protein resides in the cell membrane. Odorant receptor. This chain is Olfactory receptor 6Y1 (OR6Y1), found in Homo sapiens (Human).